The chain runs to 265 residues: Short-chain dehydrogenase/reductase GME11373 (265 aa).

Positions 26, 72, 99, and 132 each coordinate NADP(+). Catalysis depends on proton donor residues Ser148 and Ser149. Tyr163, Lys167, and Thr198 together coordinate NADP(+). Residue Tyr163 is the Proton acceptor of the active site. Lys167 acts as the Lowers pKa of active site Tyr in catalysis.

The protein belongs to the short-chain dehydrogenases/reductases (SDR) family.

It functions in the pathway secondary metabolite biosynthesis. Short-chain dehydrogenase/reductase; part of the gene cluster that mediates the biosynthesis of dibenzodioxocinones such as pestalotiollide B, a novel class of inhibitors against cholesterol ester transfer protein (CEPT). The biosynthesis initiates from condensation of acetate and malonate units catalyzed by the non-reducing PKS pks8/GME11356. Pks8/GME11356 lacks a thioesterase (TE) domain, which is important to the cyclizing of the third ring of atrochrysone carboxylic acid, and the esterase GME11355 might play the role of TE and catalyzes the cyclization reaction of the C ring. The lactamase-like protein GME11357 (or other beta-lactamases in Pestalotiopsis microspora) probably hydrolyzes the thioester bond between the ACP of pks8/GME11356 and the intermediate to release atrochrysone carboxylic acid, which is spontaneously dehydrates to form endocrocin anthrone. Endocrocin anthrone is further converted to emodin via the endocrocin intermediate. Emodin is then oxidized by several enzymes such as the Baeyer-Villiger oxidase GME11358, the oxidoreductase GME11367, the short chain dehydrogenase/reductase GME11373, as well as by other oxidoreductases from the cluster, to modify the A and C rings and open the B ring, and finally yield monodictyphenone. The prenyltransferase GME11375 may catalyze the addition reaction between the C5 side chains and the carbon bone of dibenzodioxocinones. The remaining biochemical reactions to the final product dibenzodioxocinones should be methylation catalyzed by methyltransferase GME11366 and reduction and lactonization reaction catalyzed by a series of oxidordeuctases. The polypeptide is Short-chain dehydrogenase/reductase GME11373 (Pestalotiopsis microspora).